Consider the following 72-residue polypeptide: Translation initiation factor IF-1 (72 aa).

The region spanning 1–72 (MPKEEVLEFP…TKGRITYRFK (72 aa)) is the S1-like domain.

The protein belongs to the IF-1 family. As to quaternary structure, component of the 30S ribosomal translation pre-initiation complex which assembles on the 30S ribosome in the order IF-2 and IF-3, IF-1 and N-formylmethionyl-tRNA(fMet); mRNA recruitment can occur at any time during PIC assembly.

The protein localises to the cytoplasm. One of the essential components for the initiation of protein synthesis. Stabilizes the binding of IF-2 and IF-3 on the 30S subunit to which N-formylmethionyl-tRNA(fMet) subsequently binds. Helps modulate mRNA selection, yielding the 30S pre-initiation complex (PIC). Upon addition of the 50S ribosomal subunit IF-1, IF-2 and IF-3 are released leaving the mature 70S translation initiation complex. The chain is Translation initiation factor IF-1 from Rhizobium etli (strain ATCC 51251 / DSM 11541 / JCM 21823 / NBRC 15573 / CFN 42).